The chain runs to 443 residues: Alpha-1,3/1,6-mannosyltransferase ALG2 (443 aa).

Residues 80 to 100 form a helical membrane-spanning segment; that stretch reads IFFAILRQFYLVCWLIFTGTI. 3 N-linked (GlcNAc...) asparagine glycosylation sites follow: Asn-173, Asn-207, and Asn-304.

It belongs to the glycosyltransferase group 1 family.

The protein localises to the endoplasmic reticulum membrane. It catalyses the reaction a beta-D-Man-(1-&gt;4)-beta-D-GlcNAc-(1-&gt;4)-alpha-D-GlcNAc-diphospho-di-trans,poly-cis-dolichol + GDP-alpha-D-mannose = an alpha-D-Man-(1-&gt;3)-beta-D-Man-(1-&gt;4)-beta-D-GlcNAc-(1-&gt;4)-alpha-D-GlcNAc-diphospho-di-trans,poly-cis-dolichol + GDP + H(+). It carries out the reaction an alpha-D-Man-(1-&gt;3)-beta-D-Man-(1-&gt;4)-beta-D-GlcNAc-(1-&gt;4)-alpha-D-GlcNAc-diphospho-di-trans,poly-cis-dolichol + GDP-alpha-D-mannose = an alpha-D-Man-(1-&gt;3)-[alpha-D-Man-(1-&gt;6)]-beta-D-Man-(1-&gt;4)-beta-D-GlcNAc-(1-&gt;4)-alpha-D-GlcNAc-diphospho-di-trans,poly-cis-dolichol + GDP + H(+). Its pathway is protein modification; protein glycosylation. In terms of biological role, mannosylates Man(2)GlcNAc(2)-dolichol diphosphate and Man(1)GlcNAc(2)-dolichol diphosphate to form Man(3)GlcNAc(2)-dolichol diphosphate. The chain is Alpha-1,3/1,6-mannosyltransferase ALG2 (ALG2) from Candida albicans (strain SC5314 / ATCC MYA-2876) (Yeast).